The following is a 713-amino-acid chain: Polyribonucleotide nucleotidyltransferase (713 aa).

Positions 488 and 494 each coordinate Mg(2+). The KH domain occupies 555-614 (PRIEVMNIPTDKIRDVIGSGGKVIREIVEKTGAKINIEDDGTVKIASSNGKEIEAAKKWI). Positions 624 to 692 (GEIYEGTVVK…ERGKVRLSMK (69 aa)) constitute an S1 motif domain.

This sequence belongs to the polyribonucleotide nucleotidyltransferase family. Mg(2+) serves as cofactor.

Its subcellular location is the cytoplasm. It carries out the reaction RNA(n+1) + phosphate = RNA(n) + a ribonucleoside 5'-diphosphate. Functionally, involved in mRNA degradation. Catalyzes the phosphorolysis of single-stranded polyribonucleotides processively in the 3'- to 5'-direction. This Brucella anthropi (strain ATCC 49188 / DSM 6882 / CCUG 24695 / JCM 21032 / LMG 3331 / NBRC 15819 / NCTC 12168 / Alc 37) (Ochrobactrum anthropi) protein is Polyribonucleotide nucleotidyltransferase.